A 53-amino-acid chain; its full sequence is Mannose/glucose-specific lectin alpha 1 chain (53 aa).

It belongs to the leguminous lectin family. In terms of assembly, tetramer of two alpha and two beta chains.

The sequence is that of Mannose/glucose-specific lectin alpha 1 chain from Lathyrus ochrus (Cyprus-vetch).